Here is a 559-residue protein sequence, read N- to C-terminus: Nucleolar protein 12 (559 aa).

The disordered stretch occupies residues 24–194 (ASSAGPVQAP…AGNESDIPVH (171 aa)). Basic and acidic residues predominate over residues 44–56 (QKVREPAKPKVHL). The segment covering 57–110 (EEDDEVLSEISEELSFEEDGPSDEDEDEDEDEENSEQEDGSGDEQEEEESEDVD) has biased composition (acidic residues). Over residues 141-180 (NDNDDLEGKYLDKVAAEEEADRAGKRQKNDALTKTEKPAV) the composition is skewed to basic and acidic residues. RRM domains are found at residues 211–320 (RTVF…SVAH) and 328–432 (RCVF…RAKD). The tract at residues 429-559 (RAKDPRKTAL…RASEWKKKKN (131 aa)) is disordered. Composition is skewed to basic and acidic residues over residues 516–532 (EGRR…DLKQ) and 550–559 (RASEWKKKKN).

It belongs to the RRM RBM34 family.

It localises to the nucleus. The protein localises to the nucleolus. Involved in pre-25S rRNA processing. The polypeptide is Nucleolar protein 12 (NOP12) (Gibberella zeae (strain ATCC MYA-4620 / CBS 123657 / FGSC 9075 / NRRL 31084 / PH-1) (Wheat head blight fungus)).